The primary structure comprises 276 residues: Ribosomal RNA small subunit methyltransferase J (276 aa).

Residues glutamate 135–arginine 136 and aspartate 191 contribute to the S-adenosyl-L-methionine site.

The protein belongs to the methyltransferase superfamily. RsmJ family.

It is found in the cytoplasm. The enzyme catalyses guanosine(1516) in 16S rRNA + S-adenosyl-L-methionine = N(2)-methylguanosine(1516) in 16S rRNA + S-adenosyl-L-homocysteine + H(+). Functionally, specifically methylates the guanosine in position 1516 of 16S rRNA. The chain is Ribosomal RNA small subunit methyltransferase J from Hydrogenovibrio crunogenus (strain DSM 25203 / XCL-2) (Thiomicrospira crunogena).